We begin with the raw amino-acid sequence, 105 residues long: Met repressor (105 aa).

This sequence belongs to the MetJ family. Homodimer.

Its subcellular location is the cytoplasm. This regulatory protein, when combined with SAM (S-adenosylmethionine) represses the expression of the methionine regulon and of enzymes involved in SAM synthesis. The sequence is that of Met repressor from Salmonella dublin (strain CT_02021853).